Reading from the N-terminus, the 446-residue chain is Telomere-binding protein 51 kDa subunit (446 aa).

The protein belongs to the telombin family. As to quaternary structure, monomer.

It is found in the nucleus. The protein localises to the chromosome. It localises to the telomere. May function as protective capping of the single-stranded telomeric overhang. May also participate in telomere length regulation during DNA replication. Binds specifically to the T4G4-containing extension on the 3'strand and protects this region of the telomere from nuclease digestion and chemical modification. This is Telomere-binding protein 51 kDa subunit from Euplotes crassus.